Reading from the N-terminus, the 228-residue chain is Serum amyloid P-component (228 aa).

The signal sequence occupies residues 1–20 (MDKLLLWMSVFTSLLSEAFA). A Pentraxin (PTX) domain is found at 25-224 (NQKVFVFPRE…YVVIKPRMWD (200 aa)). Asn52 is a glycosylation site (N-linked (GlcNAc...) asparagine). A disulfide bridge connects residues Cys56 and Cys115. Ca(2+) is bound by residues Asp78, Asn79, Glu156, Gln157, Asp158, and Gln168.

This sequence belongs to the pentraxin family. In terms of assembly, homopentamer. Pentraxin (or pentaxin) have a discoid arrangement of 5 non-covalently bound subunits. Ca(2+) serves as cofactor.

It localises to the secreted. This is Serum amyloid P-component (Apcs) from Rattus norvegicus (Rat).